Reading from the N-terminus, the 154-residue chain is MLKQVEIFTDGSCLGNPGPGGYGAILRYRQHEKALSAGYRLTTNNRMELMAAIVALETLTSACQVALFSDSQYVRQGITQWIHGWKRRDWKTADKKPVKNVDLWQRLDQAIGPHQVEWIWIKGHAGHPENERCDELARRAAGTPTQDDSGYTPG.

Positions 1-142 (MLKQVEIFTD…CDELARRAAG (142 aa)) constitute an RNase H type-1 domain. 4 residues coordinate Mg(2+): aspartate 10, glutamate 48, aspartate 70, and aspartate 134.

This sequence belongs to the RNase H family. In terms of assembly, monomer. It depends on Mg(2+) as a cofactor.

Its subcellular location is the cytoplasm. It catalyses the reaction Endonucleolytic cleavage to 5'-phosphomonoester.. Endonuclease that specifically degrades the RNA of RNA-DNA hybrids. The chain is Ribonuclease H from Edwardsiella ictaluri (strain 93-146).